The sequence spans 117 residues: Hainantoxin-XV-4 (117 aa).

A signal peptide spans 1–20 (MKLCAVIIASLLVCVAVASS). Residues 20 to 55 (SSDNQKEFAQEKEMTREETQSLGEHEKDDEVTGSEE) form a disordered region. The propeptide occupies 21–56 (SDNQKEFAQEKEMTREETQSLGEHEKDDEVTGSEER). Over residues 23-55 (NQKEFAQEKEMTREETQSLGEHEKDDEVTGSEE) the composition is skewed to basic and acidic residues. Intrachain disulfides connect Cys58–Cys72, Cys65–Cys78, Cys69–Cys115, and Cys71–Cys91.

The protein belongs to the neurotoxin 03 (Tx2) family. 02 subfamily. HNTX-XV sub-subfamily. In terms of tissue distribution, expressed by the venom gland.

The protein resides in the secreted. In terms of biological role, putative ion channel inhibitor. This chain is Hainantoxin-XV-4, found in Cyriopagopus hainanus (Chinese bird spider).